The following is a 564-amino-acid chain: Plant UBX domain-containing protein 8 (564 aa).

Alanine 2 carries the post-translational modification N-acetylalanine. The 43-residue stretch at 2–44 (ATPNQEAIDTFISITGASDAVALQKLEEHRGDLNQAVNAYFSE) folds into the UBA-like domain. 2 consecutive UIM domains span residues 198–217 (IEEE…AEGS) and 230–249 (EDDD…AEEE). The disordered stretch occupies residues 210–229 (SKKEAEGSSNPLLEERPLHM). 3 disordered regions span residues 267–358 (AVTA…EEHD), 371–423 (IPET…DKEM), and 443–483 (FLEE…QADE). Residues 291–300 (FDDDSDDVDE) show a composition bias toward acidic residues. 4 positions are modified to phosphoserine: serine 295, serine 324, serine 326, and serine 328. The segment covering 322 to 334 (DRSRSGSPEEEHA) has biased composition (basic and acidic residues). Positions 381-395 (FLPPQPRAQPRPPSP) are enriched in pro residues. Positions 412–478 (VASLQADRDK…DAKEASLPKE (67 aa)) form a coiled coil. The segment covering 443 to 475 (FLEEEKKKEEEAQRKLEEEQELERQLDAKEASL) has biased composition (basic and acidic residues). One can recognise a UBX domain in the interval 482–560 (DEENAITLLI…GLTSKQEALF (79 aa)).

Interacts with RABA5C/ARA-4.

This is Plant UBX domain-containing protein 8 from Arabidopsis thaliana (Mouse-ear cress).